A 239-amino-acid chain; its full sequence is Glucosamine-6-phosphate deaminase (239 aa).

The active-site Proton acceptor; for enolization step is D62. The For ring-opening step role is filled by N128. Catalysis depends on H130, which acts as the Proton acceptor; for ring-opening step. Catalysis depends on E135, which acts as the For ring-opening step.

This sequence belongs to the glucosamine/galactosamine-6-phosphate isomerase family. NagB subfamily.

The catalysed reaction is alpha-D-glucosamine 6-phosphate + H2O = beta-D-fructose 6-phosphate + NH4(+). Its pathway is amino-sugar metabolism; N-acetylneuraminate degradation; D-fructose 6-phosphate from N-acetylneuraminate: step 5/5. In terms of biological role, catalyzes the reversible isomerization-deamination of glucosamine 6-phosphate (GlcN6P) to form fructose 6-phosphate (Fru6P) and ammonium ion. In Lactobacillus helveticus (strain DPC 4571), this protein is Glucosamine-6-phosphate deaminase.